Reading from the N-terminus, the 226-residue chain is Deoxyribose-phosphate aldolase (226 aa).

Asp-84 acts as the Proton donor/acceptor in catalysis. Lys-146 (schiff-base intermediate with acetaldehyde) is an active-site residue. The Proton donor/acceptor role is filled by Lys-188.

It belongs to the DeoC/FbaB aldolase family. DeoC type 1 subfamily. As to quaternary structure, homodimer.

The protein localises to the cytoplasm. It catalyses the reaction 2-deoxy-D-ribose 5-phosphate = D-glyceraldehyde 3-phosphate + acetaldehyde. The protein operates within carbohydrate degradation; 2-deoxy-D-ribose 1-phosphate degradation; D-glyceraldehyde 3-phosphate and acetaldehyde from 2-deoxy-alpha-D-ribose 1-phosphate: step 2/2. Catalyzes a reversible aldol reaction between acetaldehyde and D-glyceraldehyde 3-phosphate to generate 2-deoxy-D-ribose 5-phosphate. The polypeptide is Deoxyribose-phosphate aldolase (Pyrobaculum aerophilum (strain ATCC 51768 / DSM 7523 / JCM 9630 / CIP 104966 / NBRC 100827 / IM2)).